The chain runs to 165 residues: MYVEMIDETGQVSEEIKKQTLELLDFAAQKLGKKDKEMAVTFVTNERSHELNLEYRDTDRPTDVISLEYKPELDITFDEEDLAENPELAEMMGEFDSYIGELFISIDKAREQAEEYGHSYEREMGFLAVHGFLHINGYDHYTPEEEAEMFGLQEEILTAYGLTRQ.

Residues His130, His134, and His140 each coordinate Zn(2+).

Belongs to the endoribonuclease YbeY family. Requires Zn(2+) as cofactor.

It localises to the cytoplasm. Single strand-specific metallo-endoribonuclease involved in late-stage 70S ribosome quality control and in maturation of the 3' terminus of the 16S rRNA. This is Endoribonuclease YbeY from Streptococcus thermophilus (strain CNRZ 1066).